The sequence spans 630 residues: MAVRLMKRCTCLLREATRLVPTVAPVGRLRLAGVSCKTLTSSVSSPSSGSLAELLGKEQVFTPYPEHQELDFLIEKASRPEQLLELLGSDHSLHHNHAALILIRLSYLLSEKPKEKALLAEDARFQRLVKLVDSQITCVWHGTLVKLLRSLYTLVLPQISKELQSVEQEVRWRLRRLKYKHLVFLAESCASFMKEQHSQELLAELLMHLERRWTEINDSRTLVTMMTMAGHLSESLMNHLEDKCLELVEQFGPDELRKVLVTLAAQSRRSVPLLRAISYHLVQKPFPMTKGMLLDLAYAYGKLSFHQTQVSQRLAADLLPFIPSMTPGEVARCAKSFAFLKWLNLPLFEAFTQHLLSRVQDVSLSHVCSVLLAFARLNFHPEQEEDQFFSMVHEKLDPVLGSLEPALQVDLVWALCVLQHVHETELHTVLHPGLHARFLESKSPKDQSTFQKLVHINTTALLEHPEYKGPFLPASAVAPIPSPSNKKMTPLQKELQETLKALLGNTDKGSLEVATQYGWVLDAEVLLDADGHFLPLRNFVAPHLAQPVGNQPLPPGAKRIAFLRWEFPNFNSRSKDLLGRFVLARRHVLAAGFLVVDVPYYEWLDLKSEWQKSAYLKDKMRKAMAEELAK.

Positions 560–618 constitute an RAP domain; that stretch reads IAFLRWEFPNFNSRSKDLLGRFVLARRHVLAAGFLVVDVPYYEWLDLKSEWQKSAYLKD.

The protein belongs to the FAST kinase family. In terms of tissue distribution, expression detected in spleen, testis, colon, heart, smooth muscle, kidney, brain, lung, liver, brown and white adipose tissue with highest expression in testis, heart, smooth muscle and brown adipose tissue.

The protein resides in the mitochondrion matrix. Its function is as follows. Plays a role in processing of mitochondrial RNA precursors and in stabilization of a subset of mature mitochondrial RNA species, such as MT-CO1, MT-CO2, MT-CYB, MT-CO3, MT-ND3, MT-ND5 and MT-ATP8/6. May play a role in cell cycle progression. This is FAST kinase domain-containing protein 4 (Tbrg4) from Mus musculus (Mouse).